Here is a 114-residue protein sequence, read N- to C-terminus: Large ribosomal subunit protein bL19 (114 aa).

This sequence belongs to the bacterial ribosomal protein bL19 family.

In terms of biological role, this protein is located at the 30S-50S ribosomal subunit interface and may play a role in the structure and function of the aminoacyl-tRNA binding site. This chain is Large ribosomal subunit protein bL19, found in Acetivibrio thermocellus (strain ATCC 27405 / DSM 1237 / JCM 9322 / NBRC 103400 / NCIMB 10682 / NRRL B-4536 / VPI 7372) (Clostridium thermocellum).